A 445-amino-acid chain; its full sequence is Solute carrier family 52, riboflavin transporter, member 2 (445 aa).

Helical transmembrane passes span 14–34 (LLVA…WVEL), 47–67 (LPSY…VVTL), 86–106 (VLGM…APVA), 112–132 (VAFL…NVTF), 147–167 (FFLG…VQGV), and 196–216 (FFWA…GLLL). The interval 228–264 (ELGSGLQVGAPGAEEEVEESSPLQEPPSQAAGTTPGP) is disordered. Over residues 247 to 258 (SSPLQEPPSQAA) the composition is skewed to low complexity. 5 consecutive transmembrane segments (helical) span residues 277-297 (ACLL…LPAV), 312-332 (LAVV…MGVL), 339-359 (LGGL…LAVL), 366-386 (VGTS…LGVF), and 404-424 (ALLA…VAMF).

It belongs to the riboflavin transporter family. As to expression, highly expressed in brain, fetal brain and salivary gland. Weakly expressed in other tissues.

The protein resides in the cell membrane. The catalysed reaction is riboflavin(in) = riboflavin(out). Its activity is regulated as follows. Riboflavin transport is Na(+)-independent but moderately pH-sensitive. Activity is strongly inhibited by riboflavin analogs, such as lumiflavin. Weakly inhibited by flavin adenine dinucleotide (FAD) and flavin mononucleotide (FMN). Its function is as follows. Plasma membrane transporter mediating the uptake by cells of the water soluble vitamin B2/riboflavin that plays a key role in biochemical oxidation-reduction reactions of the carbohydrate, lipid, and amino acid metabolism. Humans are unable to synthesize vitamin B2/riboflavin and must obtain it via intestinal absorption. May also act as a receptor for 4-hydroxybutyrate. In terms of biological role, (Microbial infection) In case of infection by retroviruses, acts as a cell receptor to retroviral envelopes similar to the porcine endogenous retrovirus (PERV-A). The polypeptide is Solute carrier family 52, riboflavin transporter, member 2 (SLC52A2) (Homo sapiens (Human)).